A 410-amino-acid chain; its full sequence is MSETAASGLRLFTSESVTEGHPDKICDAISDTILDALLSVDPHARVAVETVTTTGLVHVVGEVRTSGYVEIPKLVRDKLIEIGFNSSEVGFDGRTCGVSVSIGEQSQEIGAGVDQSHEVRSGENTDADDQAGAGDQGLMFGYATNETATLMPLPIDLAHRLARRLTQVRKTSVVSHLRPDGKTQVTLAYDESGRPVRLDTVVVSTQHDPDVTQEWLFAQIKEHVVDWVLRDSGLESTLDISGYSLLVNPSGSFVVGGPMGDAGLTGRKIIVDTYGGMARHGGGAFSGKDPSKVDRSGAYAMRWVAKNIVAAGLADRAEVQVAYAIGRAKPVGLYVETFGTAKFGLTDEQIQDAVLHVFDLRPAAIIRELDLLRPIYAGTAAYGHFGRDDLKLPWENTDRAEQLRDVLSLG.

H21 is an ATP binding site. D23 provides a ligand contact to Mg(2+). Residue E49 participates in K(+) binding. L-methionine-binding residues include E62 and Q105. The segment at 105–115 (QSQEIGAGVDQ) is flexible loop. The interval 107–133 (QEIGAGVDQSHEVRSGENTDADDQAGA) is disordered. ATP-binding positions include 180-182 (DGK), D261, 267-268 (RK), A284, and K288. D261 contacts L-methionine. K292 contacts L-methionine.

Belongs to the AdoMet synthase family. As to quaternary structure, homotetramer; dimer of dimers. Mg(2+) serves as cofactor. It depends on K(+) as a cofactor.

Its subcellular location is the cytoplasm. The enzyme catalyses L-methionine + ATP + H2O = S-adenosyl-L-methionine + phosphate + diphosphate. It participates in amino-acid biosynthesis; S-adenosyl-L-methionine biosynthesis; S-adenosyl-L-methionine from L-methionine: step 1/1. Catalyzes the formation of S-adenosylmethionine (AdoMet) from methionine and ATP. The overall synthetic reaction is composed of two sequential steps, AdoMet formation and the subsequent tripolyphosphate hydrolysis which occurs prior to release of AdoMet from the enzyme. This is S-adenosylmethionine synthase from Corynebacterium diphtheriae (strain ATCC 700971 / NCTC 13129 / Biotype gravis).